We begin with the raw amino-acid sequence, 362 residues long: 3-isopropylmalate dehydrogenase (362 aa).

An NAD(+)-binding site is contributed by 77-88 (GPKWGTGAVRPE). Arg95, Arg105, Arg134, and Asp223 together coordinate substrate. Mg(2+) is bound by residues Asp223, Asp248, and Asp252. An NAD(+)-binding site is contributed by 287-298 (GSAPDLPKGKVN).

It belongs to the isocitrate and isopropylmalate dehydrogenases family. Homodimer. It depends on Mg(2+) as a cofactor. Mn(2+) is required as a cofactor.

It localises to the cytoplasm. It catalyses the reaction (2R,3S)-3-isopropylmalate + NAD(+) = 4-methyl-2-oxopentanoate + CO2 + NADH. It participates in amino-acid biosynthesis; L-leucine biosynthesis; L-leucine from 3-methyl-2-oxobutanoate: step 3/4. Catalyzes the oxidation of 3-carboxy-2-hydroxy-4-methylpentanoate (3-isopropylmalate) to 3-carboxy-4-methyl-2-oxopentanoate. The product decarboxylates to 4-methyl-2 oxopentanoate. In Zygosaccharomyces bailii, this protein is 3-isopropylmalate dehydrogenase (LEU2).